The primary structure comprises 208 residues: MSVVFVAASKLPTPFGVFTMHGFLDEATGKEHVALTLGTVDDGAPVLGRLHSECLTGDALFSLRCDCGFQLEAALRAIAAEGRGVLLYLRQEGRGIGLLNKIRAYKLQDAGADTVEANERLGFRADQRDYGICKPMLEHLGITAIKLMTNNPRKVKALEGAGIQVTERVPLQTGLNPHNQKYLATKAGKLGHLLGSLHQGEVETPTGS.

49 to 53 serves as a coordination point for GTP; the sequence is RLHSE. Cys-54, Cys-65, and Cys-67 together coordinate Zn(2+). Residues Gln-70, 92-94, and Thr-114 contribute to the GTP site; that span reads EGR. The active-site Proton acceptor is the Asp-126. The Nucleophile role is filled by Arg-128. Positions 149 and 154 each coordinate GTP.

Belongs to the GTP cyclohydrolase II family. Requires Zn(2+) as cofactor.

It carries out the reaction GTP + 4 H2O = 2,5-diamino-6-hydroxy-4-(5-phosphoribosylamino)-pyrimidine + formate + 2 phosphate + 3 H(+). The protein operates within cofactor biosynthesis; riboflavin biosynthesis; 5-amino-6-(D-ribitylamino)uracil from GTP: step 1/4. In terms of biological role, catalyzes the conversion of GTP to 2,5-diamino-6-ribosylamino-4(3H)-pyrimidinone 5'-phosphate (DARP), formate and pyrophosphate. The sequence is that of GTP cyclohydrolase-2 from Azotobacter vinelandii (strain DJ / ATCC BAA-1303).